A 199-amino-acid chain; its full sequence is Recombination protein RecR (199 aa).

A C4-type zinc finger spans residues 56 to 71 (CSICFNWSAEDPCEIC). The Toprim domain maps to 79–174 (STWCVVADVK…GLRMTRLAFG (96 aa)).

Belongs to the RecR family.

May play a role in DNA repair. It seems to be involved in an RecBC-independent recombinational process of DNA repair. It may act with RecF and RecO. The polypeptide is Recombination protein RecR (Synechococcus sp. (strain JA-3-3Ab) (Cyanobacteria bacterium Yellowstone A-Prime)).